The primary structure comprises 85 residues: Large ribosomal subunit protein bL27 (85 aa).

This sequence belongs to the bacterial ribosomal protein bL27 family.

This chain is Large ribosomal subunit protein bL27, found in Vesicomyosocius okutanii subsp. Calyptogena okutanii (strain HA).